Reading from the N-terminus, the 78-residue chain is Probable two-component-system connector protein YcgZ (78 aa).

In terms of biological role, probably a connector protein for RcsB/C regulation of biofilm formation, providing additional signal input into the two-component signaling pathway. Partially antagonizes the activities of YmgA and AriR, proteins that, via the Rcs phosphorelay, promote the synthesis of colanic acid, an exopolysaccharide and matrix component. The protein is Probable two-component-system connector protein YcgZ (ycgZ) of Escherichia coli (strain K12).